The following is a 201-amino-acid chain: Small ribosomal subunit protein uS4c (201 aa).

A disordered region spans residues proline 19 to serine 38. One can recognise an S4 RNA-binding domain in the interval methionine 89–glutamine 149.

This sequence belongs to the universal ribosomal protein uS4 family. In terms of assembly, part of the 30S ribosomal subunit. Contacts protein S5. The interaction surface between S4 and S5 is involved in control of translational fidelity.

The protein resides in the plastid. It localises to the chloroplast. In terms of biological role, one of the primary rRNA binding proteins, it binds directly to 16S rRNA where it nucleates assembly of the body of the 30S subunit. Functionally, with S5 and S12 plays an important role in translational accuracy. In Platanus occidentalis (Sycamore), this protein is Small ribosomal subunit protein uS4c (rps4).